The following is a 660-amino-acid chain: Phosphatidylinositol-binding clathrin assembly protein (660 aa).

Residue Ser2 is modified to N-acetylserine. The ENTH domain maps to 14–145 (QHSVTGSAVS…VSYRQVAFDF (132 aa)). Phosphoserine is present on residues Ser16 and Ser20. The segment at 221-294 (KYFDMKKNQC…LEGKKIKDST (74 aa)) is interaction with PIMREG. Lys238 participates in a covalent cross-link: Glycyl lysine isopeptide (Lys-Gly) (interchain with G-Cter in SUMO2). A phosphoserine mark is found at Ser303 and Ser315. Positions 556–566 (GTTKNDVSWSQ) are enriched in polar residues. The tract at residues 556–580 (GTTKNDVSWSQPGEKKLTGGSNWQP) is disordered.

This sequence belongs to the PICALM/SNAP91 family. In terms of assembly, binds to clathrin; involves primarily the C-terminal sequences, but the full-length protein is required for full binding capacity. Binds phosphatidylinositol 4,5- bisphosphate. Interacts with PIMREG; this interaction may change the subcellular location into the nucleus. Interacts with AP2A1 (via its alpha-appendage domain). Interacts (via N-terminus) with VAMP2; VAMP3; VAMP7 and VAMP8 (Via N-terminus). Interacts with LC3/MAP1LC3A. In terms of tissue distribution, skins and livers of 1-week-old mice.

The protein localises to the cell membrane. It is found in the membrane. Its subcellular location is the clathrin-coated pit. It localises to the golgi apparatus. The protein resides in the cytoplasmic vesicle. The protein localises to the clathrin-coated vesicle. It is found in the nucleus. Its function is as follows. Cytoplasmic adapter protein that plays a critical role in clathrin-mediated endocytosis which is important in processes such as internalization of cell receptors, synaptic transmission or removal of apoptotic cells. Recruits AP-2 and attaches clathrin triskelions to the cytoplasmic side of plasma membrane leading to clathrin-coated vesicles (CCVs) assembly. Furthermore, regulates clathrin-coated vesicle size and maturation by directly sensing and driving membrane curvature. In addition to binding to clathrin, mediates the endocytosis of small R-SNARES (Soluble NSF Attachment Protein REceptors) between plasma membranes and endosomes including VAMP2, VAMP3, VAMP4, VAMP7 or VAMP8. In turn, PICALM-dependent SNARE endocytosis is required for the formation and maturation of autophagic precursors. Modulates thereby autophagy and the turnover of autophagy substrates such as MAPT/TAU or amyloid precursor protein cleaved C-terminal fragment (APP-CTF). The polypeptide is Phosphatidylinositol-binding clathrin assembly protein (Picalm) (Mus musculus (Mouse)).